Here is a 462-residue protein sequence, read N- to C-terminus: MVNKNAIILAAGKGTRMKSKLYKVLHEVCGRPMVDHVLTEVEKTEPATVVTIVGHGAEKVKDYLGDRSQYALQAEQLGTGHAVLQAEDLLKDQDGITIVVSGDTPLLTAGTFEKLFAYHHDKGAKATILTATAPDPTGYGRIIRNDIGIVEKIVEQKDTNDKEAAVNEINTGVYCFDNKTLFQALHEVTNENAQGEYYLTDVVEILKKKGEIVAAYKMPNFEESMGVNDRVALSQATKVMRQRINTAHMRNGVTLIDPESTYIEVGVKIGNDTIIEPNVVLKGNTTIGSDCFVGAGSTIIDSTIEDNIQITSSTIESAIMHTGSNIGPNSHLRPNAEIGVDVHVGNFCEVKNAKIGDRTKIGHLSYVGDATLGTDINVGCGVVFVNYDGVAKHHANVGSHVFIGSNSNIVAPVEIADHTFIAAGSTITDDVPEKAMAIARARQTNKENYWAKLPVAKDEEWQ.

The interval 1–230 (MVNKNAIILA…FEESMGVNDR (230 aa)) is pyrophosphorylase. Residues 9-12 (LAAG), K23, Q73, 78-79 (GT), 101-103 (SGD), G140, E155, N170, and N228 each bind UDP-N-acetyl-alpha-D-glucosamine. Residue D103 coordinates Mg(2+). Residue N228 coordinates Mg(2+). The segment at 231–251 (VALSQATKVMRQRINTAHMRN) is linker. The N-acetyltransferase stretch occupies residues 252–462 (GVTLIDPEST…LPVAKDEEWQ (211 aa)). UDP-N-acetyl-alpha-D-glucosamine contacts are provided by R333 and K351. H363 serves as the catalytic Proton acceptor. UDP-N-acetyl-alpha-D-glucosamine-binding residues include Y366 and N377. Acetyl-CoA-binding positions include 386–387 (NY), S405, A423, and R440.

In the N-terminal section; belongs to the N-acetylglucosamine-1-phosphate uridyltransferase family. The protein in the C-terminal section; belongs to the transferase hexapeptide repeat family. In terms of assembly, homotrimer. It depends on Mg(2+) as a cofactor.

Its subcellular location is the cytoplasm. It carries out the reaction alpha-D-glucosamine 1-phosphate + acetyl-CoA = N-acetyl-alpha-D-glucosamine 1-phosphate + CoA + H(+). The catalysed reaction is N-acetyl-alpha-D-glucosamine 1-phosphate + UTP + H(+) = UDP-N-acetyl-alpha-D-glucosamine + diphosphate. It participates in nucleotide-sugar biosynthesis; UDP-N-acetyl-alpha-D-glucosamine biosynthesis; N-acetyl-alpha-D-glucosamine 1-phosphate from alpha-D-glucosamine 6-phosphate (route II): step 2/2. Its pathway is nucleotide-sugar biosynthesis; UDP-N-acetyl-alpha-D-glucosamine biosynthesis; UDP-N-acetyl-alpha-D-glucosamine from N-acetyl-alpha-D-glucosamine 1-phosphate: step 1/1. The protein operates within bacterial outer membrane biogenesis; LPS lipid A biosynthesis. Functionally, catalyzes the last two sequential reactions in the de novo biosynthetic pathway for UDP-N-acetylglucosamine (UDP-GlcNAc). The C-terminal domain catalyzes the transfer of acetyl group from acetyl coenzyme A to glucosamine-1-phosphate (GlcN-1-P) to produce N-acetylglucosamine-1-phosphate (GlcNAc-1-P), which is converted into UDP-GlcNAc by the transfer of uridine 5-monophosphate (from uridine 5-triphosphate), a reaction catalyzed by the N-terminal domain. This is Bifunctional protein GlmU from Latilactobacillus sakei subsp. sakei (strain 23K) (Lactobacillus sakei subsp. sakei).